Here is a 293-residue protein sequence, read N- to C-terminus: ATP synthase gamma chain (293 aa).

The protein belongs to the ATPase gamma chain family. F-type ATPases have 2 components, CF(1) - the catalytic core - and CF(0) - the membrane proton channel. CF(1) has five subunits: alpha(3), beta(3), gamma(1), delta(1), epsilon(1). CF(0) has three main subunits: a, b and c.

The protein resides in the cell inner membrane. Its function is as follows. Produces ATP from ADP in the presence of a proton gradient across the membrane. The gamma chain is believed to be important in regulating ATPase activity and the flow of protons through the CF(0) complex. The protein is ATP synthase gamma chain of Nitratidesulfovibrio vulgaris (strain DSM 19637 / Miyazaki F) (Desulfovibrio vulgaris).